The primary structure comprises 1105 residues: MSKQSQHVLIALPHPLLHLVSLGLVSFIFTLFSLELSQFGTQLAPLWFPTSIMMVAFYRHAGRMWPGIALSCSLGNIAASILLFSTSSLNMTWTTINIVEAVVGAVLLRKLLPWYNPLQNLADWLRLALGSAIVPPLLGGVLVVLLTPGDDPLRAFLIWVLSESIGALALVPLGLLFKPHYLLRHRNPRLLFESLLTLAITLTLSWLSMLYLPWPFTFIIVLLMWSAVRLPRMEAFLIFLTTVMMVSLMMAADPSLLATPRTYLMSHMPWLPFLLILLPANIMTMVMYAFRAERKHISESETHFRNAMEYSAIGMALVGTEGQWLQTNKALCQFLGYSQEELRGLTFQQLTWPEDLNKDLQQVEKLISGEINTYSMEKRYYNRNGDVVWALLAVSLVRHTDGTPLYFIAQIEDINELKRTEQVNQQLMERITLANEAGGIGIWEWELKPNIFSWDKRMFELYEIPPHIKPNWQVWYECVLPEDRQHAEKVIRDSLQSRSPFKLEFRITVKDGIRHIRALANRVLNKEGEVERLLGINMDMTEVKQLNEALFQEKERLHITLDSIGEAVVCIDMAMKITFMNPVAEKMSGWTQEEALGVPLLTVLHITFGDNGPLMENIYSADTSRSAIEQDVVLHCRSGGSYDVHYSITPLSTLDGSNIGSVLVIQDVTESRKMLRQLSYSASHDALTHLANRASFEKQLRILLQTVNSTHQRHALVFIDLDRFKAVNDSAGHAAGDALLRELASLMLSMLRSSDVLARLGGDEFGLLLPDCNVESARFIATRIISAVNDYHFIWEGRVHRVGASAGITLIDDNNHQAAEVMSQADIACYASKNGGRGRVTVYEPQQAAAHSERAAMSLDEQWRMIKENQLMMLAHGVASPRIPEARNLWLISLKLWSCEGEIIDEQTFRRSFSDPALSHALDRRVFHEFFQQAAKAVASKGISISLPLSVAGLSSATLVNDLLEQLENSPLPPRLLHLIIPAEAILDHAESVQKLRLAGCRIVLSQVGRDLQIFNSLKANMADYLLLDGELCANVQGNLMDEMLITIIQGHAQRLGMKTIAGPVVLPLVMDTLSGIGVDLIYGEVIADAQPLDLLVNSSYFAIN.

The next 10 helical transmembrane spans lie at 9–29 (LIALPHPLLHLVSLGLVSFIF), 38–58 (QFGTQLAPLWFPTSIMMVAFY), 64–84 (MWPGIALSCSLGNIAASILLF), 88–108 (SLNMTWTTINIVEAVVGAVLL), 127–147 (LALGSAIVPPLLGGVLVVLLT), 156–176 (FLIWVLSESIGALALVPLGLL), 190–207 (LLFESLLTLAITLTLSWL), 211–228 (YLPWPFTFIIVLLMWSAV), 236–256 (FLIFLTTVMMVSLMMAADPSL), and 270–290 (WLPFLLILLPANIMTMVMYAF). Residues 300-370 (SETHFRNAME…QQVEKLISGE (71 aa)) form the PAS 1 domain. 2 consecutive PAC domains span residues 374–426 (YSME…VNQQ) and 501–552 (FKLE…ALFQ). The PAS 2 domain maps to 553–623 (EKERLHITLD…LMENIYSADT (71 aa)). Residues 626–680 (SAIEQDVVLHCRSGGSYDVHYSITPLSTLDGSNIGSVLVIQDVTESRKMLRQLSY) enclose the PAC 3 domain. The 134-residue stretch at 712–845 (QRHALVFIDL…GRGRVTVYEP (134 aa)) folds into the GGDEF domain. Asp720 is a Mg(2+) binding site. 3 residues coordinate substrate: Asn728, His733, and Asp737. Asp763 contacts Mg(2+). The active-site Proton acceptor is the Asp763. Arg783 is a substrate binding site. In terms of domain architecture, EAL spans 855-1104 (AAMSLDEQWR…LLVNSSYFAI (250 aa)).

In terms of assembly, homodimer. Requires Mg(2+) as cofactor.

The protein localises to the cell inner membrane. It catalyses the reaction 2 GTP = 3',3'-c-di-GMP + 2 diphosphate. It functions in the pathway purine metabolism; 3',5'-cyclic di-GMP biosynthesis. Catalyzes the synthesis of cyclic-di-GMP (c-di-GMP) via the condensation of 2 GTP molecules. Involved in the control of the switch from cell motility to adhesion via regulation of cellular levels of c-di-GMP. Part of a signaling cascade that regulates curli biosynthesis. The cascade is composed of two c-di-GMP control modules, in which c-di-GMP controlled by the DgcE/PdeH pair (module I) regulates the activity of the DgcM/PdeR pair (module II), which in turn regulates activity of the transcription factor MlrA and expression of the master biofilm regulator csgD. In Escherichia coli (strain K12), this protein is Probable diguanylate cyclase DgcE.